The primary structure comprises 110 residues: Plasma membrane ATPase (110 aa).

Residues aspartate 72 and aspartate 76 each contribute to the Mg(2+) site. The disordered stretch occupies residues 88-110 (APESTSLNLPNDKELSEIAEQAK). The span at 98 to 110 (NDKELSEIAEQAK) shows a compositional bias: basic and acidic residues.

The protein belongs to the cation transport ATPase (P-type) (TC 3.A.3) family. Type IIIA subfamily. Post-translationally, the N-terminus is blocked.

Its subcellular location is the cell membrane. The catalysed reaction is ATP + H2O + H(+)(in) = ADP + phosphate + 2 H(+)(out). Functionally, the plasma membrane ATPase of plants and fungi is a hydrogen ion pump. The proton gradient it generates drives the active transport of nutrients by H(+)-symport. The resulting external acidification and/or internal alkinization may mediate growth responses. This is Plasma membrane ATPase from Avena sativa (Oat).